We begin with the raw amino-acid sequence, 2333 residues long: Genome polyprotein (2333 aa).

In terms of domain architecture, Peptidase C28 spans 1–201; sequence MNTTDCFIAL…WKTKVQQKLK (201 aa). The Cytoplasmic segment spans residues 1 to 1481; sequence MNTTDCFIAL…SFVKRAFKRL (1481 aa). Residues Cys51, His148, and Asp163 each act as for leader protease activity in the active site. Disordered stretches follow at residues 197 to 218 and 238 to 265; these read QQKL…QSGN and QLGD…NTQN. Gly202 carries N-myristoyl glycine; by host lipidation. Polar residues-rich tracts occupy residues 204–218 and 238–251; these read GQSS…QSGN and QLGD…SNEG. Positions 252–265 are enriched in low complexity; sequence STDTTSTHTTNTQN. The antigenic epitope stretch occupies residues 789–797; the sequence is ALLRAATYY. Residues 869 to 871 carry the Cell attachment site motif; it reads RGD. In terms of domain architecture, SF3 helicase spans 1190-1354; that stretch reads NVHIANLCKV…DGYKINNKLD (165 aa). Position 1218–1225 (1218–1225) interacts with ATP; sequence GKSGQGKS. The stretch at 1482–1502 is an intramembrane region; it reads KENFEIVALCLTLLANIVIMI. At 1503 to 2333 the chain is on the cytoplasmic side; the sequence is RETRKRQKMV…RWVNAVCGDA (831 aa). Basic and acidic residues-rich tracts occupy residues 1530 to 1539 and 1550 to 1564; these read KTLDEAEKNP and FRER…RNDE. Residues 1530–1585 are disordered; it reads KTLDEAEKNPLETSGASTVGFRERPLPGQKARNDENSEPAQPAEEQPQAEGPYAGP. The span at 1567–1579 shows a compositional bias: low complexity; sequence EPAQPAEEQPQAE. An O-(5'-phospho-RNA)-tyrosine mark is found at Tyr1582, Tyr1605, and Tyr1629. Residues 1653 to 1849 enclose the Peptidase C3 domain; sequence APPTDLQKLV…YCSCVSRSML (197 aa). His1696 (for protease 3C activity; Proton donor/acceptor) is an active-site residue. Catalysis depends on for protease 3C activity residues Asp1734 and Cys1813. The Nuclear localization signal motif lies at 1879-1887; it reads MRKTKLAPT. The RdRp catalytic domain occupies 2097–2215; the sequence is RNVWDVDYSA…ASDYDLDFEA (119 aa). Asp2201 serves as the catalytic For RdRp activity.

The protein belongs to the picornaviruses polyprotein family. Interacts with host ISG15. In terms of assembly, interacts (via R-G-D motif) with host ITGAV/ITGB6. Interacts with host MAVS; this interaction inhibits binding of host TRAF3 to MAVS, thereby suppressing interferon-mediated responses. As to quaternary structure, forms homooligomers. Homohexamer. Interacts with host VIM. Interacts with host BECN1. In terms of assembly, interacts with host DCTN3. As to quaternary structure, interacts with RNA-dependent RNA polymerase; this interaction allows 3B-1 to binds 2 polymerases and act as a primer. It also allows the recruitment of the RNA-dependent RNA polymerase to host membranes. Interacts with RNA-dependent RNA polymerase; this interaction allows 3B-2 to act as a primer. In terms of assembly, interacts with RNA-dependent RNA polymerase; this interaction allows 3B-3 to act as a primer. As to quaternary structure, interacts with 3B-1; this interaction allows 3B-1 to binds 2 polymerases and act as a primer. It also allows the recruitment of the RNA-dependent RNA polymerase to host membranes. Interacts with 3B-2; this interaction allows 3B-2 to act as a primer. Interacts with 3B-3; this interaction allows 3B-3 to act as a primer. In terms of processing, removes six residues from its own C-terminus, generating sLb(pro). Post-translationally, specific enzymatic cleavages in vivo by the viral proteases yield a variety of precursors and mature proteins. The polyprotein seems to be cotranslationally cleaved at the 2A/2B junction by a ribosomal skip from one codon to the next without formation of a peptide bond. This process would release the L-P1-2A peptide from the translational complex. During virion maturation, immature virions are rendered infectious following cleavage of VP0 into VP4 and VP2. This maturation seems to be an autocatalytic event triggered by the presence of RNA in the capsid and is followed by a conformational change of the particle. In terms of processing, myristoylation is required during RNA encapsidation and formation of the mature virus particle. Post-translationally, uridylylated by the polymerase and covalently linked to the 5'-end of genomic RNA. These uridylylated forms act as a nucleotide-peptide primer for the polymerase.

It localises to the host nucleus. The protein resides in the host cytoplasm. Its subcellular location is the virion. The protein localises to the host endoplasmic reticulum membrane. It is found in the host cytoplasmic vesicle membrane. It catalyses the reaction Autocatalytically cleaves itself from the polyprotein of the foot-and-mouth disease virus by hydrolysis of a Lys-|-Gly bond, but then cleaves host cell initiation factor eIF-4G at bonds -Gly-|-Arg- and -Lys-|-Arg-.. The catalysed reaction is a ribonucleoside 5'-triphosphate + H2O = a ribonucleoside 5'-diphosphate + phosphate + H(+). It carries out the reaction RNA(n) + a ribonucleoside 5'-triphosphate = RNA(n+1) + diphosphate. The enzyme catalyses Selective cleavage of Gln-|-Gly bond in the poliovirus polyprotein. In other picornavirus reactions Glu may be substituted for Gln, and Ser or Thr for Gly.. Functionally, autocatalytically cleaves itself from the polyprotein at the L/VP0 junction. Also cleaves the host translation initiation factors EIF4G1 and EIF4G3, in order to shut off the capped cellular mRNA transcription. Plays a role in counteracting host innate antiviral response using diverse mechanisms. Possesses a deubiquitinase activity acting on both 'Lys-48' and 'Lys-63'-linked polyubiquitin chains. In turn, inhibits the ubiquitination and subsequent activation of key signaling molecules of type I IFN response such as host RIGI, TBK1, TRAF3 and TRAF6. Inhibits host NF-kappa-B activity by inducing a decrease in RELA mRNA levels. Cleaves a peptide bond in the C-terminus of host ISG15, resulting in the damaging of this modifier that can no longer be attached to target proteins. Also cleaves host G3BP1 and G3BP2 in order to inhibit cytoplasmic stress granules assembly. Its function is as follows. Lies on the inner surface of the capsid shell. After binding to the host receptor, the capsid undergoes conformational changes. Capsid protein VP4 is released, capsid protein VP1 N-terminus is externalized, and together, they shape a pore in the host membrane through which the viral genome is translocated into the host cell cytoplasm. After genome has been released, the channel shrinks. In terms of biological role, forms an icosahedral capsid of pseudo T=3 symmetry with capsid proteins VP1 and VP3. The capsid is composed of 60 copies of each capsid protein organized in the form of twelve pentamers and encloses the viral positive strand RNA genome. Upon acidifcation in the endosome, dissociates into pentamers. Forms an icosahedral capsid of pseudo T=3 symmetry with capsid proteins VP0 and VP3. The capsid is composed of 60 copies of each capsid protein organized in the form of twelve pentamers and encloses the viral positive strand RNA genome. Upon acidifcation in the endosome, dissociates into pentamers. Functionally, forms an icosahedral capsid of pseudo T=3 symmetry with capsid proteins VP2 and VP3. The capsid is composed of 60 copies of each capsid protein organized in the form of twelve pentamers and encloses the viral positive strand RNA genome. Mediates cell entry by attachment to an integrin receptor, usually host ITGAV/ITGB6. In addition, targets host MAVS to suppress type I IFN pathway. Upon acidifcation in the endosome, dissociates into pentamers. Its function is as follows. Mediates self-processing of the polyprotein by a translational effect termed 'ribosome skipping'. Mechanistically, 2A-mediated cleavage occurs between the C-terminal glycine and the proline of the downstream protein 2B. In the case of foot-and-mouth disease virus, the 2A oligopeptide is post-translationally 'trimmed' from the C-terminus of the upstream protein 1D by 3C proteinase. In terms of biological role, plays an essential role in the virus replication cycle by acting as a viroporin. Creates a pore in the host endoplasmic reticulum and as a consequence releases Ca2+ in the cytoplasm of infected cell. In turn, high levels of cytoplasmic calcium may trigger membrane trafficking and transport of viral ER-associated proteins to viroplasms, sites of viral genome replication. Associates with and induces structural rearrangements of intracellular membranes. Triggers host autophagy by interacting with host BECN1 and thereby promotes viral replication. Participates in viral replication and interacts with host DHX9. Displays RNA-binding, nucleotide binding and NTPase activities. May play a role in virion morphogenesis and viral RNA encapsidation by interacting with the capsid protein VP3. Functionally, plays important roles in virus replication, virulence and host range. Cooperates with host DDX56 to inhibit IRF3 nuclear translocation and subsequent type I interferon production. Its function is as follows. Covalently linked to the 5'-end of both the positive-strand and negative-strand genomic RNAs. Acts as a genome-linked replication primer. In terms of biological role, cysteine protease that generates mature viral proteins from the precursor polyprotein. In addition to its proteolytic activity, binds to viral RNA and thus influences viral genome replication. RNA and substrate bind cooperatively to the protease. RNA-directed RNA polymerase 3D-POL replicates genomic and antigenomic RNA by recognizing replications specific signals. Covalently attaches UMP to a tyrosine of VPg, which is used to prime RNA synthesis. The positive stranded RNA genome is first replicated at virus induced membranous vesicles, creating a dsRNA genomic replication form. This dsRNA is then used as template to synthesize positive stranded RNA genomes. ss(+)RNA genomes are either translated, replicated or encapsidated. This is Genome polyprotein from Bos taurus (Bovine).